Reading from the N-terminus, the 553-residue chain is Zinc finger matrin-type protein 1 (553 aa).

The tract at residues 16-36 (TPSSPAATCSGPMAGGDTSSN) is disordered. 4 Matrin-type zinc fingers span residues 61–91 (TFCKVCNAVLQFESHRISHYEGKKHAQKVRL), 125–155 (KFCGLCNMVFSSPVVAQTHYVGKVHAKKMRQ), 223–253 (KYCKLCCASFNKALVAQQHYSGKKHARNQAR), and 275–305 (YVCPICNITLTSIEMYQSHMQGNKHQIKESM). 2 disordered regions span residues 341–402 (QFRQ…DQRV) and 428–553 (HISR…ILGF). Residues 350 to 362 (DSCDYEEEEEQEP) are compositionally biased toward acidic residues. A compositionally biased stretch (low complexity) spans 431 to 453 (RSPTSQDSSDNSSGSSSDESSGS). Basic residues predominate over residues 456 to 476 (KDKRRKRKHHRESRLRGSGRI). Over residues 477–513 (RRGDENSEKRKRKGEDADSGKEDNKHDRGKTSGGDKD) the composition is skewed to basic and acidic residues.

The protein localises to the nucleus. The sequence is that of Zinc finger matrin-type protein 1 (zmat1) from Xenopus tropicalis (Western clawed frog).